A 168-amino-acid polypeptide reads, in one-letter code: Ribosome maturation factor RimM (168 aa).

Residues Glu95–Leu166 form the PRC barrel domain.

Belongs to the RimM family. Binds ribosomal protein uS19.

Its subcellular location is the cytoplasm. In terms of biological role, an accessory protein needed during the final step in the assembly of 30S ribosomal subunit, possibly for assembly of the head region. Essential for efficient processing of 16S rRNA. May be needed both before and after RbfA during the maturation of 16S rRNA. It has affinity for free ribosomal 30S subunits but not for 70S ribosomes. This chain is Ribosome maturation factor RimM, found in Staphylococcus saprophyticus subsp. saprophyticus (strain ATCC 15305 / DSM 20229 / NCIMB 8711 / NCTC 7292 / S-41).